A 98-amino-acid polypeptide reads, in one-letter code: NADH-ubiquinone oxidoreductase chain 4L (98 aa).

A run of 3 helical transmembrane segments spans residues 2–22 (PSIFINIILAFATALLGTLVF), 29–49 (SLLCLEGMMLSMFILSTLIIL), and 61–81 (ILLLVFAACEAAVGLALLVMV).

The protein belongs to the complex I subunit 4L family. As to quaternary structure, core subunit of respiratory chain NADH dehydrogenase (Complex I) which is composed of 45 different subunits.

It localises to the mitochondrion inner membrane. It carries out the reaction a ubiquinone + NADH + 5 H(+)(in) = a ubiquinol + NAD(+) + 4 H(+)(out). Core subunit of the mitochondrial membrane respiratory chain NADH dehydrogenase (Complex I) which catalyzes electron transfer from NADH through the respiratory chain, using ubiquinone as an electron acceptor. Part of the enzyme membrane arm which is embedded in the lipid bilayer and involved in proton translocation. The polypeptide is NADH-ubiquinone oxidoreductase chain 4L (MT-ND4L) (Propithecus tattersalli (Golden-crowned Sifaka)).